A 901-amino-acid chain; its full sequence is Protein translocase subunit SecA (901 aa).

ATP contacts are provided by residues Q87, 105–109 (GEGKT), and D512. 4 residues coordinate Zn(2+): C885, C887, C896, and H897.

The protein belongs to the SecA family. As to quaternary structure, monomer and homodimer. Part of the essential Sec protein translocation apparatus which comprises SecA, SecYEG and auxiliary proteins SecDF-YajC and YidC. Zn(2+) is required as a cofactor.

The protein localises to the cell inner membrane. It localises to the cytoplasm. It catalyses the reaction ATP + H2O + cellular proteinSide 1 = ADP + phosphate + cellular proteinSide 2.. Part of the Sec protein translocase complex. Interacts with the SecYEG preprotein conducting channel. Has a central role in coupling the hydrolysis of ATP to the transfer of proteins into and across the cell membrane, serving both as a receptor for the preprotein-SecB complex and as an ATP-driven molecular motor driving the stepwise translocation of polypeptide chains across the membrane. The chain is Protein translocase subunit SecA from Salmonella schwarzengrund (strain CVM19633).